The primary structure comprises 65 residues: Large ribosomal subunit protein bL35 (65 aa).

This sequence belongs to the bacterial ribosomal protein bL35 family.

In Aeromonas hydrophila subsp. hydrophila (strain ATCC 7966 / DSM 30187 / BCRC 13018 / CCUG 14551 / JCM 1027 / KCTC 2358 / NCIMB 9240 / NCTC 8049), this protein is Large ribosomal subunit protein bL35.